A 543-amino-acid chain; its full sequence is Formate--tetrahydrofolate ligase (543 aa).

54 to 61 (TPAGEGKT) lines the ATP pocket.

It belongs to the formate--tetrahydrofolate ligase family.

The catalysed reaction is (6S)-5,6,7,8-tetrahydrofolate + formate + ATP = (6R)-10-formyltetrahydrofolate + ADP + phosphate. The protein operates within one-carbon metabolism; tetrahydrofolate interconversion. The protein is Formate--tetrahydrofolate ligase of Thermus thermophilus (strain ATCC BAA-163 / DSM 7039 / HB27).